A 64-amino-acid chain; its full sequence is Large ribosomal subunit protein bL35 (64 aa).

Belongs to the bacterial ribosomal protein bL35 family.

This is Large ribosomal subunit protein bL35 from Desulforamulus reducens (strain ATCC BAA-1160 / DSM 100696 / MI-1) (Desulfotomaculum reducens).